A 350-amino-acid chain; its full sequence is Protein-glutamate methylesterase/protein-glutamine glutaminase 1 (350 aa).

One can recognise a Response regulatory domain in the interval 3–121; that stretch reads KVLIVEDSPV…RDYDIRARDL (119 aa). Aspartate 54 is subject to 4-aspartylphosphate. The 195-residue stretch at 148–342 folds into the CheB-type methylesterase domain; that stretch reads PASGEPDIGK…PPEKIARVLV (195 aa). Catalysis depends on residues serine 170, histidine 197, and aspartate 290.

The protein belongs to the CheB family. In terms of processing, phosphorylated by CheA. Phosphorylation of the N-terminal regulatory domain activates the methylesterase activity.

The protein resides in the cytoplasm. It carries out the reaction [protein]-L-glutamate 5-O-methyl ester + H2O = L-glutamyl-[protein] + methanol + H(+). The catalysed reaction is L-glutaminyl-[protein] + H2O = L-glutamyl-[protein] + NH4(+). Its function is as follows. Involved in chemotaxis. Part of a chemotaxis signal transduction system that modulates chemotaxis in response to various stimuli. Catalyzes the demethylation of specific methylglutamate residues introduced into the chemoreceptors (methyl-accepting chemotaxis proteins or MCP) by CheR. Also mediates the irreversible deamidation of specific glutamine residues to glutamic acid. This Syntrophus aciditrophicus (strain SB) protein is Protein-glutamate methylesterase/protein-glutamine glutaminase 1.